We begin with the raw amino-acid sequence, 85 residues long: Cell division topological specificity factor (85 aa).

It belongs to the MinE family.

Functionally, prevents the cell division inhibition by proteins MinC and MinD at internal division sites while permitting inhibition at polar sites. This ensures cell division at the proper site by restricting the formation of a division septum at the midpoint of the long axis of the cell. The polypeptide is Cell division topological specificity factor (Xylella fastidiosa (strain M23)).